The following is a 655-amino-acid chain: Fructose-1,6-bisphosphatase class 3 (655 aa).

Belongs to the FBPase class 3 family. Mn(2+) serves as cofactor.

The enzyme catalyses beta-D-fructose 1,6-bisphosphate + H2O = beta-D-fructose 6-phosphate + phosphate. The protein operates within carbohydrate biosynthesis; gluconeogenesis. This Porphyromonas gingivalis (strain ATCC 33277 / DSM 20709 / CIP 103683 / JCM 12257 / NCTC 11834 / 2561) protein is Fructose-1,6-bisphosphatase class 3.